The primary structure comprises 402 residues: Olfactomedin-like protein 1 (402 aa).

The N-terminal stretch at 1–28 is a signal peptide; the sequence is MMVALPGASASLVLFLAAFLPPLQHAQD. N-linked (GlcNAc...) asparagine glycosylation is present at asparagine 66. Residues 73 to 135 are a coiled coil; sequence RCQTHTNEYR…EAEEEKKIRT (63 aa). Residues asparagine 138 and asparagine 183 are each glycosylated (N-linked (GlcNAc...) asparagine). Residues 140–397 enclose the Olfactomedin-like domain; sequence SCDNMLMAIK…QIIYKLQTKK (258 aa). Cysteines 141 and 324 form a disulfide.

Highly N-glycosylated.

The protein localises to the secreted. In Rattus norvegicus (Rat), this protein is Olfactomedin-like protein 1 (Olfml1).